Consider the following 306-residue polypeptide: Methionyl-tRNA formyltransferase (306 aa).

108-111 (SLLP) contacts (6S)-5,6,7,8-tetrahydrofolate.

The protein belongs to the Fmt family.

The catalysed reaction is L-methionyl-tRNA(fMet) + (6R)-10-formyltetrahydrofolate = N-formyl-L-methionyl-tRNA(fMet) + (6S)-5,6,7,8-tetrahydrofolate + H(+). Functionally, attaches a formyl group to the free amino group of methionyl-tRNA(fMet). The formyl group appears to play a dual role in the initiator identity of N-formylmethionyl-tRNA by promoting its recognition by IF2 and preventing the misappropriation of this tRNA by the elongation apparatus. The chain is Methionyl-tRNA formyltransferase from Paenarthrobacter aurescens (strain TC1).